The following is a 430-amino-acid chain: Lipoyl synthase, mitochondrial (430 aa).

The transit peptide at 1–37 (MAASTGKLRTLFSAHSSLSARPSSALPALRLTILRSY) directs the protein to the mitochondrion. Residues 40 to 56 (TTPPDSSISNPSNPSTT) show a composition bias toward low complexity. A disordered region spans residues 40–64 (TTPPDSSISNPSNPSTTVKRPPTAF). 7 residues coordinate [4Fe-4S] cluster: Cys141, Cys146, Cys152, Cys172, Cys176, Cys179, and Ser387. Positions 155–376 (GSSKSAATAT…KERALEMGFL (222 aa)) constitute a Radical SAM core domain.

It belongs to the radical SAM superfamily. Lipoyl synthase family. [4Fe-4S] cluster is required as a cofactor.

It is found in the mitochondrion. It carries out the reaction [[Fe-S] cluster scaffold protein carrying a second [4Fe-4S](2+) cluster] + N(6)-octanoyl-L-lysyl-[protein] + 2 oxidized [2Fe-2S]-[ferredoxin] + 2 S-adenosyl-L-methionine + 4 H(+) = [[Fe-S] cluster scaffold protein] + N(6)-[(R)-dihydrolipoyl]-L-lysyl-[protein] + 4 Fe(3+) + 2 hydrogen sulfide + 2 5'-deoxyadenosine + 2 L-methionine + 2 reduced [2Fe-2S]-[ferredoxin]. It participates in protein modification; protein lipoylation via endogenous pathway; protein N(6)-(lipoyl)lysine from octanoyl-[acyl-carrier-protein]: step 2/2. Its function is as follows. Catalyzes the radical-mediated insertion of two sulfur atoms into the C-6 and C-8 positions of the octanoyl moiety bound to the lipoyl domains of lipoate-dependent enzymes, thereby converting the octanoylated domains into lipoylated derivatives. The chain is Lipoyl synthase, mitochondrial from Blastomyces gilchristii (strain SLH14081) (Blastomyces dermatitidis).